The chain runs to 309 residues: tRNA-dihydrouridine(16) synthase (309 aa).

Residues 7–9 (PME) and Gln-68 each bind FMN. The active-site Proton donor is the Cys-98. FMN contacts are provided by residues Arg-137, Asn-198, and 220–221 (GC).

Belongs to the Dus family. DusC subfamily. FMN is required as a cofactor.

It carries out the reaction 5,6-dihydrouridine(16) in tRNA + NADP(+) = uridine(16) in tRNA + NADPH + H(+). The enzyme catalyses 5,6-dihydrouridine(16) in tRNA + NAD(+) = uridine(16) in tRNA + NADH + H(+). Its function is as follows. Catalyzes the synthesis of 5,6-dihydrouridine (D), a modified base found in the D-loop of most tRNAs, via the reduction of the C5-C6 double bond in target uridines. Specifically modifies U16 in tRNAs. This Azotobacter vinelandii protein is tRNA-dihydrouridine(16) synthase.